The following is a 548-amino-acid chain: Membrane protein insertase YidC (548 aa).

A helical membrane pass occupies residues 6-26 (NLLVIALLFVSFMIWQAWEQD). The interval 28–55 (NPQPQAQQTTQTTTTAAGSAADQGVPAS) is disordered. Residues 30–50 (QPQAQQTTQTTTTAAGSAADQ) are compositionally biased toward low complexity. The next 4 membrane-spanning stretches (helical) occupy residues 350 to 370 (FVGN…GIMY), 420 to 440 (LGGC…YYML), 458 to 478 (LSAQ…MFFI), and 499 to 519 (PVIF…YYIV).

This sequence belongs to the OXA1/ALB3/YidC family. Type 1 subfamily. As to quaternary structure, interacts with the Sec translocase complex via SecD. Specifically interacts with transmembrane segments of nascent integral membrane proteins during membrane integration.

The protein resides in the cell inner membrane. Its function is as follows. Required for the insertion and/or proper folding and/or complex formation of integral membrane proteins into the membrane. Involved in integration of membrane proteins that insert both dependently and independently of the Sec translocase complex, as well as at least some lipoproteins. Aids folding of multispanning membrane proteins. In Escherichia fergusonii (strain ATCC 35469 / DSM 13698 / CCUG 18766 / IAM 14443 / JCM 21226 / LMG 7866 / NBRC 102419 / NCTC 12128 / CDC 0568-73), this protein is Membrane protein insertase YidC.